We begin with the raw amino-acid sequence, 576 residues long: MNIFNQLKQDIIVASKQLYNNQAIANTATIDIPKDSFNGDLSSNVAMIIAAKESIAPREVALKFKEVLITLPYIASIEIAGPGFINFTIKADSWQASIKDILQHEEKFFEIDIDKSRNINIEYVSANPTGPMHIGHARGAVYGDVLARILQKVSYSVTKEYYVNDAGSQINDLVSTVLLRYKEALGEQITIPAGLYPGEYLIPLGQILAKEYGNKLLTMNYDERFKIIKSFAVEKMLDLNRKDLADLGIKHDIFFSEQSLHDKGEIEETVKLLESMGLIYEGTLPAPKGKIHEEWDNRVQKLFKSTKYGDSQDRPIEKADGSWSYFASDLAYAKDKIERGANHLIYVLGADHSGYVKRIEAIVKALGKEQVKVDVKICQLVNFVENGVPVKMSKRLGSFASVQDVNNEVGKDIIRFMMLTRQNDKPLDFDLVKVKEQSRENPIFYVQYAHVRTISILSKARELMPESYNNFESGKYDLSLLSSEEEIEIIKLLVSWTKTLEASAKYFEPHRIAFYLINLASKFHSMWNFGKENSEYRFVIESNKELTLARLALASAIQKVIASGLEVIGVEPMNKM.

The 'HIGH' region motif lies at 126 to 136; the sequence is ANPTGPMHIGH.

Belongs to the class-I aminoacyl-tRNA synthetase family. As to quaternary structure, monomer.

The protein localises to the cytoplasm. It carries out the reaction tRNA(Arg) + L-arginine + ATP = L-arginyl-tRNA(Arg) + AMP + diphosphate. The polypeptide is Arginine--tRNA ligase (Rickettsia rickettsii (strain Iowa)).